The primary structure comprises 497 residues: ATP synthase subunit alpha 2 (497 aa).

167–174 (GERATGKT) serves as a coordination point for ATP.

The protein belongs to the ATPase alpha/beta chains family. F-type ATPases have 2 components, CF(1) - the catalytic core - and CF(0) - the membrane proton channel. CF(1) has five subunits: alpha(3), beta(3), gamma(1), delta(1), epsilon(1). CF(0) has four main subunits: a(1), b(1), b'(1) and c(9-12).

It is found in the cell inner membrane. The catalysed reaction is ATP + H2O + 4 H(+)(in) = ADP + phosphate + 5 H(+)(out). Produces ATP from ADP in the presence of a proton gradient across the membrane. The alpha chain is a regulatory subunit. This is ATP synthase subunit alpha 2 from Cereibacter sphaeroides (strain ATCC 17029 / ATH 2.4.9) (Rhodobacter sphaeroides).